We begin with the raw amino-acid sequence, 384 residues long: MPSPRIRKMSLSRALDKYLKTVSVHKKGHQQEFYRSNVIKRYPIALRNMDEITTVDIATYRDVRLAEINPRTGKPITGNTVRLELALLSSLFNIARVEWGTCRTNPVELVRKPKVSSGRDRRLTSSEERRLSRYFREKNLMLYVIFHLALETAMRQGEILALRWEHIDLRHGVAHLPETKNGHSRDVPLSRRARNFLQMMPVNLHGNVFDYTASGFKNAWRIATQRLRIEDLHFHDLRHEAISRFFELGSLNVMEIAAISGHRSMNMLKRYTHLRAWQLVSKLDARRRQTQKVAAWFVPYPAHITTIDEENGQKAHRIEIGDFDNLHVTATTKEEAVHRASEVLLRTLAIAAQKGERVPSPGALPVNDPDYIMICPLNPGSTPL.

The Core-binding (CB) domain maps to 9–96 (MSLSRALDKY…LLSSLFNIAR (88 aa)). In terms of domain architecture, Tyr recombinase spans 118–284 (GRDRRLTSSE…RAWQLVSKLD (167 aa)). Active-site residues include R155, K180, H235, R238, and H262. The O-(3'-phospho-DNA)-tyrosine intermediate role is filled by Y271.

This sequence belongs to the 'phage' integrase family.

Shufflon-specific DNA recombinase. This chain is Shufflon-specific DNA recombinase (rci), found in Escherichia coli.